An 863-amino-acid polypeptide reads, in one-letter code: DNA mismatch repair protein MutS (863 aa).

Residue 615 to 622 (GPNMAGKS) participates in ATP binding.

This sequence belongs to the DNA mismatch repair MutS family.

Functionally, this protein is involved in the repair of mismatches in DNA. It is possible that it carries out the mismatch recognition step. This protein has a weak ATPase activity. The chain is DNA mismatch repair protein MutS from Pelotomaculum thermopropionicum (strain DSM 13744 / JCM 10971 / SI).